The chain runs to 379 residues: UDP-4-amino-4-deoxy-L-arabinose--oxoglutarate aminotransferase (379 aa).

K182 is modified (N6-(pyridoxal phosphate)lysine).

The protein belongs to the DegT/DnrJ/EryC1 family. ArnB subfamily. As to quaternary structure, homodimer. Pyridoxal 5'-phosphate serves as cofactor.

The enzyme catalyses UDP-4-amino-4-deoxy-beta-L-arabinose + 2-oxoglutarate = UDP-beta-L-threo-pentopyranos-4-ulose + L-glutamate. Its pathway is nucleotide-sugar biosynthesis; UDP-4-deoxy-4-formamido-beta-L-arabinose biosynthesis; UDP-4-deoxy-4-formamido-beta-L-arabinose from UDP-alpha-D-glucuronate: step 2/3. It participates in bacterial outer membrane biogenesis; lipopolysaccharide biosynthesis. Catalyzes the conversion of UDP-4-keto-arabinose (UDP-Ara4O) to UDP-4-amino-4-deoxy-L-arabinose (UDP-L-Ara4N). The modified arabinose is attached to lipid A and is required for resistance to polymyxin and cationic antimicrobial peptides. This Shigella boydii serotype 4 (strain Sb227) protein is UDP-4-amino-4-deoxy-L-arabinose--oxoglutarate aminotransferase.